We begin with the raw amino-acid sequence, 587 residues long: Proteasome-associated ATPase (587 aa).

A coiled-coil region spans residues 1-94 (MAARDDAEAR…KEEVDRLAQP (94 aa)). Residue 276 to 281 (GCGKTL) coordinates ATP. Residues 586–587 (YL) are docks into pockets in the proteasome alpha-ring.

Belongs to the AAA ATPase family. As to quaternary structure, homohexamer. Assembles into a hexameric ring structure that caps the 20S proteasome core. Strongly interacts with the prokaryotic ubiquitin-like protein Pup through a hydrophobic interface; the interacting region of ARC lies in its N-terminal coiled-coil domain. There is one Pup binding site per ARC hexamer ring. Upon ATP-binding, the C-terminus of ARC interacts with the alpha-rings of the proteasome core, possibly by binding to the intersubunit pockets.

Its pathway is protein degradation; proteasomal Pup-dependent pathway. Its function is as follows. ATPase which is responsible for recognizing, binding, unfolding and translocation of pupylated proteins into the bacterial 20S proteasome core particle. May be essential for opening the gate of the 20S proteasome via an interaction with its C-terminus, thereby allowing substrate entry and access to the site of proteolysis. Thus, the C-termini of the proteasomal ATPase may function like a 'key in a lock' to induce gate opening and therefore regulate proteolysis. The sequence is that of Proteasome-associated ATPase from Streptosporangium roseum (strain ATCC 12428 / DSM 43021 / JCM 3005 / KCTC 9067 / NCIMB 10171 / NRRL 2505 / NI 9100).